The primary structure comprises 396 residues: MAKKIVSDLDLKGKTVLVRADFNVPLKDGEITNDNRIVQALPTIQYIIEQGGKIVLFSHLGKVKEESDKAKLTLRPVAEDLSKKLDKEVVFVPETRGEKLEAAIKDLKEGDVLLVENTRYEDLDGKKESKNDPELGKYWASLGDVFVNDAFGTAHREHASNVGISTHLETAAGFLMDKEIKFIGGVVNDPHKPVVAILGGAKVSDKINVIKNLVNIADKIIIGGGMAYTFLKAQGKEIGISLLEEDKIDFAKDLLEKHGDKIVLPVDTKVAKEFSNDAKITVVPSDSIPADQEGMDIGPNTVKLFADELEGAHTVVWNGPMGVFEFSNFAQGTIGVCKAIANLKDAITIIGGGDSAAAAISLGFENDFTHISTGGGASLEYLEGKELPGIKAINNK.

Residues 21-23 (DFN), R36, 59-62 (HLGK), R119, and R156 contribute to the substrate site. ATP is bound by residues K206, G294, E325, and 352–355 (GGDS).

This sequence belongs to the phosphoglycerate kinase family. In terms of assembly, monomer.

The protein localises to the cytoplasm. It carries out the reaction (2R)-3-phosphoglycerate + ATP = (2R)-3-phospho-glyceroyl phosphate + ADP. The protein operates within carbohydrate degradation; glycolysis; pyruvate from D-glyceraldehyde 3-phosphate: step 2/5. This chain is Phosphoglycerate kinase, found in Staphylococcus aureus (strain USA300).